The chain runs to 113 residues: U11-theraphotoxin-Hhn1t (113 aa).

An N-terminal signal peptide occupies residues 1-21; it reads MNTVRVTFLLVFVLAVSLGQA. Residues 22-74 constitute a propeptide that is removed on maturation; it reads DKDENRMEMQEKTEQGKSYLDFAENLLLQKLEELEAKLLEEDSEESRNSRQKR. Positions 60–69 are enriched in basic and acidic residues; sequence LEEDSEESRN. The segment at 60 to 83 is disordered; the sequence is LEEDSEESRNSRQKRCIGEGVPCD. 3 cysteine pairs are disulfide-bonded: Cys75/Cys90, Cys82/Cys95, and Cys89/Cys110.

This sequence belongs to the neurotoxin 14 (magi-1) family. 01 (HNTX-16) subfamily. In terms of tissue distribution, expressed by the venom gland.

The protein resides in the secreted. Functionally, probable ion channel inhibitor. The polypeptide is U11-theraphotoxin-Hhn1t (Cyriopagopus hainanus (Chinese bird spider)).